The primary structure comprises 297 residues: tRNA dimethylallyltransferase (297 aa).

15–22 (GPTASGKS) is an ATP binding site. 17 to 22 (TASGKS) serves as a coordination point for substrate. 2 interaction with substrate tRNA regions span residues 40 to 43 (DSMQ) and 164 to 168 (QRIVR).

The protein belongs to the IPP transferase family. As to quaternary structure, monomer. The cofactor is Mg(2+).

It carries out the reaction adenosine(37) in tRNA + dimethylallyl diphosphate = N(6)-dimethylallyladenosine(37) in tRNA + diphosphate. In terms of biological role, catalyzes the transfer of a dimethylallyl group onto the adenine at position 37 in tRNAs that read codons beginning with uridine, leading to the formation of N6-(dimethylallyl)adenosine (i(6)A). This chain is tRNA dimethylallyltransferase, found in Rhizobium etli (strain ATCC 51251 / DSM 11541 / JCM 21823 / NBRC 15573 / CFN 42).